A 108-amino-acid polypeptide reads, in one-letter code: Tubulin-specific chaperone A (108 aa).

Alanine 2 is subject to N-acetylalanine.

The protein belongs to the TBCA family. Supercomplex made of cofactors A to E. Cofactors A and D function by capturing and stabilizing tubulin in a quasi-native conformation. Cofactor E binds to the cofactor D-tubulin complex; interaction with cofactor C then causes the release of tubulin polypeptides that are committed to the native state. As to expression, widely expressed, but is most abundant in the testis.

Its subcellular location is the cytoplasm. The protein resides in the cytoskeleton. In terms of biological role, tubulin-folding protein; involved in the early step of the tubulin folding pathway. This is Tubulin-specific chaperone A (TBCA) from Bos taurus (Bovine).